We begin with the raw amino-acid sequence, 58 residues long: Large ribosomal subunit protein uL30 (58 aa).

Belongs to the universal ribosomal protein uL30 family. In terms of assembly, part of the 50S ribosomal subunit.

This chain is Large ribosomal subunit protein uL30, found in Bacteroides fragilis (strain ATCC 25285 / DSM 2151 / CCUG 4856 / JCM 11019 / LMG 10263 / NCTC 9343 / Onslow / VPI 2553 / EN-2).